We begin with the raw amino-acid sequence, 448 residues long: Homogentisate 1,2-dioxygenase (448 aa).

H303 functions as the Proton acceptor in the catalytic mechanism. Fe cation contacts are provided by H346 and E352. Homogentisate contacts are provided by Y361 and H382. H382 contributes to the Fe cation binding site.

Belongs to the homogentisate dioxygenase family. In terms of assembly, hexamer; dimer of trimers. It depends on Fe cation as a cofactor.

The catalysed reaction is homogentisate + O2 = 4-maleylacetoacetate + H(+). It functions in the pathway amino-acid degradation; L-phenylalanine degradation; acetoacetate and fumarate from L-phenylalanine: step 4/6. Involved in the catabolism of homogentisate (2,5-dihydroxyphenylacetate or 2,5-OH-PhAc), a central intermediate in the degradation of phenylalanine and tyrosine. Catalyzes the oxidative ring cleavage of the aromatic ring of homogentisate to yield maleylacetoacetate. This chain is Homogentisate 1,2-dioxygenase, found in Rhodopseudomonas palustris (strain TIE-1).